The chain runs to 164 residues: NADH-quinone oxidoreductase subunit I (164 aa).

4Fe-4S ferredoxin-type domains lie at 54-84 (LRRY…IEAG) and 95-124 (VRYD…EGPN). [4Fe-4S] cluster is bound by residues Cys-64, Cys-67, Cys-70, Cys-74, Cys-104, Cys-107, Cys-110, and Cys-114.

This sequence belongs to the complex I 23 kDa subunit family. In terms of assembly, NDH-1 is composed of 14 different subunits. Subunits NuoA, H, J, K, L, M, N constitute the membrane sector of the complex. It depends on [4Fe-4S] cluster as a cofactor.

It localises to the cell inner membrane. It carries out the reaction a quinone + NADH + 5 H(+)(in) = a quinol + NAD(+) + 4 H(+)(out). Functionally, NDH-1 shuttles electrons from NADH, via FMN and iron-sulfur (Fe-S) centers, to quinones in the respiratory chain. The immediate electron acceptor for the enzyme in this species is believed to be ubiquinone. Couples the redox reaction to proton translocation (for every two electrons transferred, four hydrogen ions are translocated across the cytoplasmic membrane), and thus conserves the redox energy in a proton gradient. The sequence is that of NADH-quinone oxidoreductase subunit I from Mesorhizobium japonicum (strain LMG 29417 / CECT 9101 / MAFF 303099) (Mesorhizobium loti (strain MAFF 303099)).